We begin with the raw amino-acid sequence, 173 residues long: Photosystem I reaction center subunit XI (173 aa).

2 helical membrane passes run Leu92–Tyr112 and Leu148–Ile168.

This sequence belongs to the PsaL family.

It localises to the cellular thylakoid membrane. The protein is Photosystem I reaction center subunit XI of Nostoc punctiforme (strain ATCC 29133 / PCC 73102).